Reading from the N-terminus, the 388-residue chain is Pepsin A-5 (388 aa).

A signal peptide spans 1–15 (MKWLLLLGLVALSEC). A propeptide spans 16 to 62 (IMYKVPLIRKKSLRRTLSERGLLKDFLKKHNLNPARKYFPQWEAPTL) (activation peptide). One can recognise a Peptidase A1 domain in the interval 76 to 385 (YFGTIGIGTP…DRANNQVGLA (310 aa)). D94 is a catalytic residue. A disulfide bridge links C107 with C112. S130 carries the post-translational modification Phosphoserine. C268 and C272 are oxidised to a cystine. The active site involves D277. C311 and C344 are disulfide-bonded.

The protein belongs to the peptidase A1 family.

The protein localises to the secreted. It catalyses the reaction Preferential cleavage: hydrophobic, preferably aromatic, residues in P1 and P1' positions. Cleaves 1-Phe-|-Val-2, 4-Gln-|-His-5, 13-Glu-|-Ala-14, 14-Ala-|-Leu-15, 15-Leu-|-Tyr-16, 16-Tyr-|-Leu-17, 23-Gly-|-Phe-24, 24-Phe-|-Phe-25 and 25-Phe-|-Tyr-26 bonds in the B chain of insulin.. Functionally, shows particularly broad specificity; although bonds involving phenylalanine and leucine are preferred, many others are also cleaved to some extent. The chain is Pepsin A-5 (PGA5) from Homo sapiens (Human).